A 327-amino-acid polypeptide reads, in one-letter code: Fe-S cluster assembly protein DRE2 (327 aa).

Positions 1–14 (MSPATVTIDTTPDF) are enriched in polar residues. Disordered regions lie at residues 1 to 20 (MSPA…GGAP) and 153 to 179 (NKGE…AAAA). The N-terminal SAM-like domain stretch occupies residues 17–144 (GGAPHSTLLL…EKPAEEVAAV (128 aa)). Residues 145-214 (PLKFLKKKNK…EDELMTEEDL (70 aa)) are linker. Positions 164–179 (PAAATQPTAPAPAAAA) are enriched in low complexity. Cys-224, Cys-235, Cys-238, and Cys-240 together coordinate [2Fe-2S] cluster. The segment at 224–240 (CAPKPGKKRRACKDCTC) is fe-S binding site A. Residues Cys-290, Cys-293, Cys-301, and Cys-304 each coordinate [4Fe-4S] cluster. Short sequence motifs (cx2C motif) lie at residues 290–293 (CGSC) and 301–304 (CADC). Residues 290 to 304 (CGSCALGDAFRCADC) form a fe-S binding site B region.

Belongs to the anamorsin family. As to quaternary structure, monomer. Interacts with TAH18. Interacts with MIA40. Requires [2Fe-2S] cluster as cofactor. The cofactor is [4Fe-4S] cluster.

The protein resides in the cytoplasm. The protein localises to the mitochondrion intermembrane space. Its function is as follows. Component of the cytosolic iron-sulfur (Fe-S) protein assembly (CIA) machinery required for the maturation of extramitochondrial Fe-S proteins. Part of an electron transfer chain functioning in an early step of cytosolic Fe-S biogenesis, facilitating the de novo assembly of a [4Fe-4S] cluster on the scaffold complex CFD1-NBP35. Electrons are transferred to DRE2 from NADPH via the FAD- and FMN-containing protein TAH18. TAH18-DRE2 are also required for the assembly of the diferric tyrosyl radical cofactor of ribonucleotide reductase (RNR), probably by providing electrons for reduction during radical cofactor maturation in the catalytic small subunit RNR2. This chain is Fe-S cluster assembly protein DRE2, found in Pyricularia oryzae (strain 70-15 / ATCC MYA-4617 / FGSC 8958) (Rice blast fungus).